The sequence spans 184 residues: Photosystem I assembly protein Ycf4 (184 aa).

Helical transmembrane passes span Phe22–Ser42 and Ile57–Ser77.

The protein belongs to the Ycf4 family.

Its subcellular location is the plastid. It localises to the chloroplast thylakoid membrane. Seems to be required for the assembly of the photosystem I complex. The polypeptide is Photosystem I assembly protein Ycf4 (Coffea arabica (Arabian coffee)).